We begin with the raw amino-acid sequence, 193 residues long: Putative protein-glutamate methylesterase/protein-glutamine glutaminase (193 aa).

Residues 1–179 (MNYEAIVIGV…DYVLSLEKIA (179 aa)) enclose the CheB-type methylesterase domain. Active-site residues include S11, H38, and D131.

This sequence belongs to the CheB family.

The protein localises to the cytoplasm. It catalyses the reaction [protein]-L-glutamate 5-O-methyl ester + H2O = L-glutamyl-[protein] + methanol + H(+). The catalysed reaction is L-glutaminyl-[protein] + H2O = L-glutamyl-[protein] + NH4(+). Its function is as follows. May be involved in chemotaxis. The sequence is that of Putative protein-glutamate methylesterase/protein-glutamine glutaminase (cheB2) from Leptospira interrogans serogroup Icterohaemorrhagiae serovar copenhageni (strain Fiocruz L1-130).